Here is a 106-residue protein sequence, read N- to C-terminus: COX assembly mitochondrial protein homolog (106 aa).

Ala2 is modified (N-acetylalanine). The CHCH domain maps to 28–71 (KERCSEQVQDFTKCCKNSGVLMVVKCRKENSALKECLTAYYNDP). Short sequence motifs (cx9C motif) lie at residues 31 to 41 (CSEQVQDFTKC) and 53 to 63 (CRKENSALKEC). Cystine bridges form between Cys31–Cys63 and Cys41–Cys53.

This sequence belongs to the CMC family. In terms of assembly, component of the MITRAC (mitochondrial translation regulation assembly intermediate of cytochrome c oxidase complex) complex, the core components of this complex being COA3/MITRAC12 and COX14.

It is found in the mitochondrion. Component of the MITRAC (mitochondrial translation regulation assembly intermediate of cytochrome c oxidase complex) complex, that regulates cytochrome c oxidase assembly. The polypeptide is COX assembly mitochondrial protein homolog (CMC1) (Homo sapiens (Human)).